Consider the following 192-residue polypeptide: Probable nicotinate-nucleotide adenylyltransferase (192 aa).

This sequence belongs to the NadD family.

It carries out the reaction nicotinate beta-D-ribonucleotide + ATP + H(+) = deamido-NAD(+) + diphosphate. It functions in the pathway cofactor biosynthesis; NAD(+) biosynthesis; deamido-NAD(+) from nicotinate D-ribonucleotide: step 1/1. In terms of biological role, catalyzes the reversible adenylation of nicotinate mononucleotide (NaMN) to nicotinic acid adenine dinucleotide (NaAD). The sequence is that of Probable nicotinate-nucleotide adenylyltransferase from Rhizobium etli (strain ATCC 51251 / DSM 11541 / JCM 21823 / NBRC 15573 / CFN 42).